Consider the following 258-residue polypeptide: 2-succinyl-6-hydroxy-2,4-cyclohexadiene-1-carboxylate synthase (258 aa).

This sequence belongs to the AB hydrolase superfamily. MenH family. Monomer.

The catalysed reaction is 5-enolpyruvoyl-6-hydroxy-2-succinyl-cyclohex-3-ene-1-carboxylate = (1R,6R)-6-hydroxy-2-succinyl-cyclohexa-2,4-diene-1-carboxylate + pyruvate. It functions in the pathway quinol/quinone metabolism; 1,4-dihydroxy-2-naphthoate biosynthesis; 1,4-dihydroxy-2-naphthoate from chorismate: step 3/7. It participates in quinol/quinone metabolism; menaquinone biosynthesis. Functionally, catalyzes a proton abstraction reaction that results in 2,5-elimination of pyruvate from 2-succinyl-5-enolpyruvyl-6-hydroxy-3-cyclohexene-1-carboxylate (SEPHCHC) and the formation of 2-succinyl-6-hydroxy-2,4-cyclohexadiene-1-carboxylate (SHCHC). This is 2-succinyl-6-hydroxy-2,4-cyclohexadiene-1-carboxylate synthase from Enterobacter sp. (strain 638).